Reading from the N-terminus, the 322-residue chain is tRNA uridine(34) hydroxylase (322 aa).

The Rhodanese domain maps to 126-220 (LAEDTVVIDA…YGKDPEVKGE (95 aa)). C180 acts as the Cysteine persulfide intermediate in catalysis.

The protein belongs to the TrhO family.

The catalysed reaction is uridine(34) in tRNA + AH2 + O2 = 5-hydroxyuridine(34) in tRNA + A + H2O. Its function is as follows. Catalyzes oxygen-dependent 5-hydroxyuridine (ho5U) modification at position 34 in tRNAs. The chain is tRNA uridine(34) hydroxylase from Shouchella clausii (strain KSM-K16) (Alkalihalobacillus clausii).